A 155-amino-acid chain; its full sequence is Endoribonuclease YbeY (155 aa).

3 residues coordinate Zn(2+): histidine 120, histidine 124, and histidine 130.

Belongs to the endoribonuclease YbeY family. Zn(2+) is required as a cofactor.

The protein localises to the cytoplasm. In terms of biological role, single strand-specific metallo-endoribonuclease involved in late-stage 70S ribosome quality control and in maturation of the 3' terminus of the 16S rRNA. The polypeptide is Endoribonuclease YbeY (Staphylococcus epidermidis (strain ATCC 12228 / FDA PCI 1200)).